Reading from the N-terminus, the 576-residue chain is MDAFATSPTSALIKAVNCIAHVTPMAGEDSSENRRASNYKPSTWDYEFLQSLATSHNTVQEKHMKMAEKLKEEVKSMIKGQMEPVAKLELINILQRLGLKYRFESEIKEELFSLYKDGTDAWWVDNLHATALRFRLLRENGIFVPQDVFETLKDKSGKFKSQLCKDVRGLLSLYEASYLGWEGEDLLDEAKKFSTTNLNNVKESISSNTLGRLVKHALNLPLHWSAARYEARWFIDEYEKEENVNPNLLKYAKLDFNIVQSIHQQELGNLARWWVETGLDKLSFVRNTLMQNFMWGCAMVFEPQYGKVRDAAVKQASLIAMVDDVYDVYGSLEELEIFTDIVDRWDITGIDKLPRNISMILLTMFNTANQIGYDLLRDRGFNGIPHIAQAWATLCKKYLKEAKWYHSGYKPTLEEYLENGLVSISFVLSLVTAYLQTEILENLTYESAAYVNSVPPLVRYSGLLNRLYNDLGTSSAEIARGDTLKSIQCYMTQTGATEEAAREHIKGLVHEAWKGMNKCLFEQTPFAEPFVGFNVNTVRGSQFFYQHGDGYAVTESWTKDLSLSVLIHPIPLNEED.

Residues Arg-286, Asp-323, Asp-327, Arg-466, and Asn-469 each contribute to the (2E)-geranyl diphosphate site. The Mg(2+) site is built by Asp-323 and Asp-327. The DDXXD motif motif lies at Asp-323–Asp-327. 3 residues coordinate Mg(2+): Asn-469, Thr-473, and Glu-477.

It belongs to the terpene synthase family. Tpsb subfamily. Mg(2+) serves as cofactor. Mn(2+) is required as a cofactor.

It carries out the reaction (2E)-geranyl diphosphate + H2O = (R)-alpha-terpineol + diphosphate. Functionally, monoterpene synthase producing mainly (+)-alpha-terpineol (44%) and (-)-limonene (33.6%) and lower amounts of (E)-geraniol (5.9%), linalool (5.0%), myrcene (3.4%), (-)-alpha-pinene (3.3%), (+)-sabinene (3.0%) and alpha-terpinolene (1.6%). The sequence is that of (+)-alpha-terpineol synthase from Santalum album (White sandalwood).